The primary structure comprises 147 residues: Cytochrome c oxidase subunit 3 (147 aa).

The next 4 helical transmembrane spans lie at 13-33, 48-68, 83-103, and 125-145; these read FQIP…VTWA, GLFI…YEYF, FFMA…FLLI, and AWYW…IYWW.

It belongs to the cytochrome c oxidase subunit 3 family. Component of the cytochrome c oxidase (complex IV, CIV), a multisubunit enzyme composed of a catalytic core of 3 subunits and several supernumerary subunits. The complex exists as a monomer or a dimer and forms supercomplexes (SCs) in the inner mitochondrial membrane with ubiquinol-cytochrome c oxidoreductase (cytochrome b-c1 complex, complex III, CIII).

It localises to the mitochondrion inner membrane. It carries out the reaction 4 Fe(II)-[cytochrome c] + O2 + 8 H(+)(in) = 4 Fe(III)-[cytochrome c] + 2 H2O + 4 H(+)(out). Its function is as follows. Component of the cytochrome c oxidase, the last enzyme in the mitochondrial electron transport chain which drives oxidative phosphorylation. The respiratory chain contains 3 multisubunit complexes succinate dehydrogenase (complex II, CII), ubiquinol-cytochrome c oxidoreductase (cytochrome b-c1 complex, complex III, CIII) and cytochrome c oxidase (complex IV, CIV), that cooperate to transfer electrons derived from NADH and succinate to molecular oxygen, creating an electrochemical gradient over the inner membrane that drives transmembrane transport and the ATP synthase. Cytochrome c oxidase is the component of the respiratory chain that catalyzes the reduction of oxygen to water. Electrons originating from reduced cytochrome c in the intermembrane space (IMS) are transferred via the dinuclear copper A center (CU(A)) of subunit 2 and heme A of subunit 1 to the active site in subunit 1, a binuclear center (BNC) formed by heme A3 and copper B (CU(B)). The BNC reduces molecular oxygen to 2 water molecules using 4 electrons from cytochrome c in the IMS and 4 protons from the mitochondrial matrix. The sequence is that of Cytochrome c oxidase subunit 3 (COIII) from Spodoptera frugiperda (Fall armyworm).